Reading from the N-terminus, the 2066-residue chain is Kinesin-like protein KIN-12C (2066 aa).

2 disordered regions span residues 1–41 (MSRN…SQIQ) and 59–116 (RAQH…RVSL). Over residues 20-33 (SLSLFSPSRPPLNS) the composition is skewed to low complexity. Residues 67–76 (GPEKKFEVLE) are compositionally biased toward basic and acidic residues. Over residues 99–109 (EPNSAQSTPTR) the composition is skewed to polar residues. The 338-residue stretch at 168–505 (NVQVLIRLRP…LKFAQRAKLI (338 aa)) folds into the Kinesin motor domain. 249–256 (GQTGSGKT) is an ATP binding site. Microtubules-binding stretches follow at residues 375–379 (SSRSH), 406–412 (VDLAGSE), and 454–458 (HVPYR). Coiled-coil stretches lie at residues 1521-1618 (DLKT…VDEI) and 1650-1772 (KIYA…EILL). Disordered regions lie at residues 1803-1823 (SAAE…RGSS) and 2043-2066 (KYRK…TRYR). The stretch at 1905–2051 (VQRVVEKAQQ…AKYRKTSNNH (147 aa)) forms a coiled coil. Residues 2047-2066 (TSNNHPSTRTQGQSSGTRYR) show a composition bias toward polar residues.

This sequence belongs to the TRAFAC class myosin-kinesin ATPase superfamily. Kinesin family. KIN-12 subfamily. In terms of assembly, interacts with TAN. Interacts with RANGAP1. As to expression, expressed in tissues enriched in dividing cells, such as root meristems, root primordia, and leaf primordia/young leaves.

Its subcellular location is the cytoplasm. It localises to the cytoskeleton. It is found in the phragmoplast. Functionally, involved in the spatial control of cytokinesis by a proper phragmoplast guidance. Localizes TAN to the cortical division sites (CDS) during cytokinesis via direct binding. The polypeptide is Kinesin-like protein KIN-12C (Arabidopsis thaliana (Mouse-ear cress)).